Reading from the N-terminus, the 419-residue chain is GTPase Obg (419 aa).

In terms of domain architecture, Obg spans 1–158; it reads MHFVDEAFNE…FKIKTELKVL (158 aa). One can recognise an OBG-type G domain in the interval 159 to 324; that stretch reads ADIGLLGFPS…LKYKMSSFLQ (166 aa). GTP-binding positions include 165–172, 190–194, 211–214, 278–281, and 305–307; these read GFPSVGKS, FTTIK, DLPG, NKMD, and SLV. 2 residues coordinate Mg(2+): S172 and T192. The 78-residue stretch at 342 to 419 folds into the OCT domain; the sequence is TLTDNLKTIS…KICDRLFDFL (78 aa).

Belongs to the TRAFAC class OBG-HflX-like GTPase superfamily. OBG GTPase family. In terms of assembly, monomer. It depends on Mg(2+) as a cofactor.

It is found in the cytoplasm. In terms of biological role, an essential GTPase which binds GTP, GDP and possibly (p)ppGpp with moderate affinity, with high nucleotide exchange rates and a fairly low GTP hydrolysis rate. Plays a role in control of the cell cycle, stress response, ribosome biogenesis and in those bacteria that undergo differentiation, in morphogenesis control. This chain is GTPase Obg, found in Aster yellows witches'-broom phytoplasma (strain AYWB).